The chain runs to 378 residues: Schlafen family member 2 (378 aa).

It belongs to the Schlafen family. In terms of tissue distribution, mainly expressed in the thymus, lymph node and spleen.

The protein localises to the cytoplasm. Functionally, tRNA-binding protein involved in T-cell mediated immunity. Plays a key role during the metabolic reprograming phase of activated T-cell, when T-cells produce reactive oxygen species (ROS): acts by binding tRNAs and protecting them from cleavage by the oxidative stress-activated ribonuclease angiogenin (ANG). Also required for T-cell quiescence maintenance. The protein is Schlafen family member 2 of Mus musculus (Mouse).